Here is a 167-residue protein sequence, read N- to C-terminus: Lipoprotein signal peptidase (167 aa).

A run of 4 helical transmembrane segments spans residues 8–28, 46–66, 68–88, and 101–121; these read TFLT…VVLL, WGHF…FGLF, QYKI…ALFL, and IALT…LLHG. Residues aspartate 125 and aspartate 143 contribute to the active site. A helical membrane pass occupies residues 139–159; that stretch reads FNLADAFISIGTLLLIGHLYF.

The protein belongs to the peptidase A8 family.

It localises to the cell inner membrane. It catalyses the reaction Release of signal peptides from bacterial membrane prolipoproteins. Hydrolyzes -Xaa-Yaa-Zaa-|-(S,diacylglyceryl)Cys-, in which Xaa is hydrophobic (preferably Leu), and Yaa (Ala or Ser) and Zaa (Gly or Ala) have small, neutral side chains.. The protein operates within protein modification; lipoprotein biosynthesis (signal peptide cleavage). This protein specifically catalyzes the removal of signal peptides from prolipoproteins. This is Lipoprotein signal peptidase from Chlamydia trachomatis serovar L2 (strain ATCC VR-902B / DSM 19102 / 434/Bu).